We begin with the raw amino-acid sequence, 227 residues long: Small ribosomal subunit protein uS3m (227 aa).

Belongs to the universal ribosomal protein uS3 family. As to quaternary structure, component of the mitochondrial small ribosomal subunit (mt-SSU). Mature yeast 74S mitochondrial ribosomes consist of a small (37S) and a large (54S) subunit. The 37S small subunit contains a 15S ribosomal RNA (15S mt-rRNA) and at least 32 different proteins. The 54S large subunit contains a 21S rRNA (21S mt-rRNA) and at least 45 different proteins. uS3m, uS4m and uS5m form the narrow entry site of the mRNA channel.

The protein localises to the mitochondrion. Its function is as follows. Essential for mitochondrial protein synthesis and required for the maturation of small ribosomal subunits. Functionally, component of the mitochondrial ribosome (mitoribosome), a dedicated translation machinery responsible for the synthesis of mitochondrial genome-encoded proteins, including at least some of the essential transmembrane subunits of the mitochondrial respiratory chain. The mitoribosomes are attached to the mitochondrial inner membrane and translation products are cotranslationally integrated into the membrane. uS3m is essential for mitochondrial protein synthesis and required for the maturation of small ribosomal subunits. The sequence is that of Small ribosomal subunit protein uS3m (var1) from Schizosaccharomyces pombe (strain 972 / ATCC 24843) (Fission yeast).